The sequence spans 284 residues: Nucleotide-binding protein Sputcn32_0712 (284 aa).

8–15 (GRSGSGKS) serves as a coordination point for ATP. 56–59 (DVRN) provides a ligand contact to GTP.

The protein belongs to the RapZ-like family.

In terms of biological role, displays ATPase and GTPase activities. In Shewanella putrefaciens (strain CN-32 / ATCC BAA-453), this protein is Nucleotide-binding protein Sputcn32_0712.